The following is a 615-amino-acid chain: MSGKAQQQSRLKELISRGREQGYLTYAEVNDHLPEDISDPEQVEDIIRMINDMGINVFESAPDADALLLAEADTDEAAAEEAAAALAAVETDIGRTTDPVRMYMREMGTVELLTREGEIEIAKRIEEGIREVMGAIAHFPGTVDHILSEYTRVTTEGGRLSDVLSGYIDPDDGITPPAAEVPPPVDTKTAKADDDSEDEEAEATEDEEEAESGPDPVIAAQRFGAVADQMEVTRKALKKHGRENKQAIAEMLALAELFMPIKLVPKQFEGLVERVRSALDRLRQQERAIMQLCVRDARMPRADFLRQFPGNEVDESWTDALAKGKSKYAEAIARLQPDIIRCQQKLTALEVETGLKIAEIKDINRRMSIGEAKARRAKKEMVEANLRLVISIAKKYTNRGLQFLDLIQEGNIGLMKAVDKFEYRRGYKFSTYATWWIRQAITRSIADQARTIRIPVHMIETINKLNRISRQMLQEMGREPTPEELGERMEMPEDKIRKVLKIAKEPISMETPIGDDEDSHLGDFIEDSTMQSPIDVATVESLKEATREVLSGLTAREAKVLRMRFGIDMNTDHTLEEVGKQFDVTRERIRQIEAKALRKLRHPTRSEHLRSFLDE.

Residues 166 to 216 (GYIDPDDGITPPAAEVPPPVDTKTAKADDDSEDEEAEATEDEEEAESGPDP) form a disordered region. Positions 194 to 212 (DDSEDEEAEATEDEEEAES) are enriched in acidic residues. Residues 381 to 451 (MVEANLRLVI…TRSIADQART (71 aa)) form a sigma-70 factor domain-2 region. The Interaction with polymerase core subunit RpoC motif lies at 405–408 (DLIQ). The segment at 460–536 (ETINKLNRIS…DSTMQSPIDV (77 aa)) is sigma-70 factor domain-3. Positions 549–602 (VLSGLTAREAKVLRMRFGIDMNTDHTLEEVGKQFDVTRERIRQIEAKALRKLRH) are sigma-70 factor domain-4. Residues 575 to 594 (LEEVGKQFDVTRERIRQIEA) constitute a DNA-binding region (H-T-H motif).

This sequence belongs to the sigma-70 factor family. RpoD/SigA subfamily. In terms of assembly, interacts transiently with the RNA polymerase catalytic core.

It is found in the cytoplasm. Sigma factors are initiation factors that promote the attachment of RNA polymerase to specific initiation sites and are then released. This sigma factor is the primary sigma factor during exponential growth. This is RNA polymerase sigma factor RpoD from Pseudomonas protegens (strain DSM 19095 / LMG 27888 / CFBP 6595 / CHA0).